Here is a 321-residue protein sequence, read N- to C-terminus: Ribonucleoside-diphosphate reductase small subunit (321 aa).

3 residues coordinate Fe cation: aspartate 78, glutamate 108, and histidine 111. Residue tyrosine 115 is part of the active site. The helical transmembrane segment at 165–185 threads the bilayer; it reads ILMILIEGLFFASSFASIAYL. Positions 171, 205, and 208 each coordinate Fe cation.

The protein belongs to the ribonucleoside diphosphate reductase small chain family. As to quaternary structure, heterotetramer composed of a homodimer of the large subunit (R1) and a homodimer of the small subunit (R2). Larger multisubunit protein complex are also active, composed of (R1)n(R2)n. Fe cation serves as cofactor.

It localises to the host membrane. It catalyses the reaction a 2'-deoxyribonucleoside 5'-diphosphate + [thioredoxin]-disulfide + H2O = a ribonucleoside 5'-diphosphate + [thioredoxin]-dithiol. Functionally, ribonucleoside-diphosphate reductase holoenzyme provides the precursors necessary for viral DNA synthesis. Allows virus growth in non-dividing cells, as well as reactivation from latency in infected hosts. Catalyzes the biosynthesis of deoxyribonucleotides from the corresponding ribonucleotides. The polypeptide is Ribonucleoside-diphosphate reductase small subunit (Equus caballus (Horse)).